Reading from the N-terminus, the 209-residue chain is Type III pantothenate kinase (209 aa).

5 to 12 contributes to the ATP binding site; sequence DIGNSNAN. Residues Y68 and 72–75 each bind substrate; that span reads GIDR. The Proton acceptor role is filled by D74. D89 is a binding site for K(+). Position 92 (S92) interacts with ATP. T144 is a substrate binding site.

It belongs to the type III pantothenate kinase family. In terms of assembly, homodimer. NH4(+) is required as a cofactor. Requires K(+) as cofactor.

The protein localises to the cytoplasm. It carries out the reaction (R)-pantothenate + ATP = (R)-4'-phosphopantothenate + ADP + H(+). Its pathway is cofactor biosynthesis; coenzyme A biosynthesis; CoA from (R)-pantothenate: step 1/5. Its function is as follows. Catalyzes the phosphorylation of pantothenate (Pan), the first step in CoA biosynthesis. This is Type III pantothenate kinase from Campylobacter jejuni (strain RM1221).